The sequence spans 96 residues: Prokineticin Bv8-like peptide 2 (96 aa).

An N-terminal signal peptide occupies residues 1–19 (MKCFAQIVVLLLVIAFSHG). Intrachain disulfides connect cysteine 26–cysteine 38, cysteine 32–cysteine 50, cysteine 37–cysteine 78, cysteine 60–cysteine 86, and cysteine 80–cysteine 95.

The protein belongs to the AVIT (prokineticin) family. In terms of tissue distribution, expressed by the skin glands.

The protein resides in the secreted. Functionally, potent agonist for both PKR1/PROKR1 and PKR2/PROKR2, and inducer of a potent and long-lasting hyperalgesia. Also potentiates capsaicin-induced TRPV1 current when tested on DRG neurons. At subnanomolar concentrations, this protein both induces potent chemotaxis of macrophages and stimulates LPS-induced production of the pro-inflammatory cytokines IL-1 and IL-12. In vivo, potently stimulates the contraction of the guinea-pig gastrointestinal (GI) smooth muscle (nanomolar concentration) and rabbit aortic rings. This Bombina maxima (Giant fire-bellied toad) protein is Prokineticin Bv8-like peptide 2.